We begin with the raw amino-acid sequence, 127 residues long: S1-like domain-containing protein C146.08c (127 aa).

Residues 10 to 86 enclose the S1-like domain; it reads SFDPPARLEK…NKIDGTILYV (77 aa). Residues 107–127 are disordered; the sequence is ESLNQNDSEESSSSEEEYDSD. Acidic residues predominate over residues 113 to 127; sequence DSEESSSSEEEYDSD. Residue Tyr-124 is modified to Phosphotyrosine. Ser-126 carries the post-translational modification Phosphoserine.

Belongs to the EIF1AD family.

It localises to the cytoplasm. It is found in the nucleus. The sequence is that of S1-like domain-containing protein C146.08c from Schizosaccharomyces pombe (strain 972 / ATCC 24843) (Fission yeast).